The sequence spans 118 residues: Late cornified envelope protein 1B (118 aa).

A disordered region spans residues 87 to 118 (CHRPQSSGCCSQPSGGSSCCGGGSGQHSGGCC). Residues 90–103 (PQSSGCCSQPSGGS) show a composition bias toward low complexity. Residues 104–118 (SCCGGGSGQHSGGCC) show a composition bias toward gly residues.

It belongs to the LCE family. As to quaternary structure, interacts with CYSRT1; the interaction is direct. Skin-specific. Expression was readily detected in adult trunk skin, adult arm skin, fetal skin, penal skin, vulva, esophagus and tongue. Not expressed in the cervix, rectum, lung, colon, or placenta.

In terms of biological role, precursors of the cornified envelope of the stratum corneum. This Homo sapiens (Human) protein is Late cornified envelope protein 1B (LCE1B).